Reading from the N-terminus, the 339-residue chain is Uroporphyrinogen decarboxylase (339 aa).

Residues 21–25 (RQAGR), D71, Y147, S202, and H315 each bind substrate.

It belongs to the uroporphyrinogen decarboxylase family. In terms of assembly, homodimer.

It localises to the cytoplasm. It catalyses the reaction uroporphyrinogen III + 4 H(+) = coproporphyrinogen III + 4 CO2. It participates in porphyrin-containing compound metabolism; protoporphyrin-IX biosynthesis; coproporphyrinogen-III from 5-aminolevulinate: step 4/4. Functionally, catalyzes the decarboxylation of four acetate groups of uroporphyrinogen-III to yield coproporphyrinogen-III. This is Uroporphyrinogen decarboxylase from Helicobacter pylori (strain G27).